Consider the following 431-residue polypeptide: Enolase (431 aa).

(2R)-2-phosphoglycerate is bound at residue Q167. E209 serves as the catalytic Proton donor. Positions 246, 290, and 316 each coordinate Mg(2+). Positions 341, 370, 371, and 392 each coordinate (2R)-2-phosphoglycerate. Residue K341 is the Proton acceptor of the active site.

Belongs to the enolase family. In terms of assembly, component of the RNA degradosome, a multiprotein complex involved in RNA processing and mRNA degradation. Mg(2+) serves as cofactor.

The protein resides in the cytoplasm. It is found in the secreted. The protein localises to the cell surface. It catalyses the reaction (2R)-2-phosphoglycerate = phosphoenolpyruvate + H2O. It functions in the pathway carbohydrate degradation; glycolysis; pyruvate from D-glyceraldehyde 3-phosphate: step 4/5. Its function is as follows. Catalyzes the reversible conversion of 2-phosphoglycerate (2-PG) into phosphoenolpyruvate (PEP). It is essential for the degradation of carbohydrates via glycolysis. This is Enolase from Shigella flexneri serotype 5b (strain 8401).